A 63-amino-acid chain; its full sequence is Prokaryotic ubiquitin-like protein Pup (63 aa).

A disordered region spans residues 1-28 (MSDRQTQIPAGGGREDDHDDQVQSAGQV). The interval 19 to 57 (DDQVQSAGQVQVNTEGVDDLLDEIDGLLENNAEEFVRSY) is ARC ATPase binding. Glu63 is covalently cross-linked (Isoglutamyl lysine isopeptide (Glu-Lys) (interchain with K-? in acceptor proteins)).

This sequence belongs to the prokaryotic ubiquitin-like protein family. As to quaternary structure, strongly interacts with the proteasome-associated ATPase ARC through a hydrophobic interface; the interacting region of Pup lies in its C-terminal half. There is one Pup binding site per ARC hexamer ring.

It participates in protein degradation; proteasomal Pup-dependent pathway. Functionally, protein modifier that is covalently attached to lysine residues of substrate proteins, thereby targeting them for proteasomal degradation. The tagging system is termed pupylation. This Corynebacterium efficiens (strain DSM 44549 / YS-314 / AJ 12310 / JCM 11189 / NBRC 100395) protein is Prokaryotic ubiquitin-like protein Pup.